A 96-amino-acid chain; its full sequence is Small ribosomal subunit protein bS6 (96 aa).

This sequence belongs to the bacterial ribosomal protein bS6 family.

Its function is as follows. Binds together with bS18 to 16S ribosomal RNA. The sequence is that of Small ribosomal subunit protein bS6 (rpsF) from Mycobacterium leprae (strain TN).